The chain runs to 896 residues: MNYVGQLAGQVIVTVKELYKGINQATLSGCIDVIVVQQQDGSYQCSPFHVRFGKLGVLRSKEKVIDIEINGSAVDLHMKLGDNGEAFFVEETEEEYEKLPAYLATSPIPTEDQFFKDIDTPLVKSGGDETPSQSSDISHVLETETIFTPSSVKKKKRRRKKYKQDSKKEEQAASAAAEDTCDVGVSSDDDKGAQAARGSSNASLKEEECKEPLLFHSGDHYPLSDGDWSPLETTYPQTACPKSDSELEVKPAESLLRSESHMEWTWGGFPESTKVSKRERSDHHPRTATITPSENTHFRVIPSEDNLISEVEKDASMEDTVCTIVKPKPRALGTQMSDPTSVAELLEPPLESTQISSMLDADHLPNAALAEAPSESKPAAKVDSPSKKKGVHKRSQHQGPDDIYLDDLKGLEPEVAALYFPKSESEPGSRQWPESDTLSGSQSPQSVGSAAADSGTECLSDSAMDLPDVTLSLCGGLSENGEISKEKFMEHIITYHEFAENPGLIDNPNLVIRIYNRYYNWALAAPMILSLQVFQKSLPKATVESWVKDKMPKKSGRWWFWRKRESMTKQLPESKEGKSEAPPASDLPSSSKEPAGARPAENDSSSDEGSQELEESITVDPIPTEPLSHGSTTSYKKSLRLSSDQIAKLKLHDGPNDVVFSITTQYQGTCRCAGTIYLWNWNDKIIISDIDGTITKSDALGQILPQLGKDWTHQGIAKLYHSINENGYKFLYCSARAIGMADMTRGYLHWVNDKGTILPRGPLMLSPSSLFSAFHREVIEKKPEKFKIECLNDIKNLFAPSKQPFYAAFGNRPNDVYAYTQVGVPDCRIFTVNPKGELIQERTKGNKSSYHRLSELVEHVFPLLSKEQNSAFPCPEFSSFCYWRDPIPEVDLDDLS.

The segment at 1–108 is N-LIP; sequence MNYVGQLAGQ…LPAYLATSPI (108 aa). S106 carries the post-translational modification Phosphoserine. Residues 120 to 208 are disordered; sequence TPLVKSGGDE…SSNASLKEEE (89 aa). A compositionally biased stretch (basic residues) spans 152 to 162; it reads VKKKKRRRKKY. The Nuclear localization signal signature appears at 153–158; that stretch reads KKKKRR. 5 positions are modified to phosphoserine: S174, S186, S187, S243, and S303. 2 disordered regions span residues 370 to 405 and 420 to 459; these read AEAP…DIYL and FPKS…TECL. Residues 387–396 are compositionally biased toward basic residues; it reads KKKGVHKRSQ. Polar residues predominate over residues 426–448; that stretch reads EPGSRQWPESDTLSGSQSPQSVG. S566 carries the post-translational modification Phosphoserine. Residues 569–579 show a composition bias toward basic and acidic residues; sequence KQLPESKEGKS. The tract at residues 569-636 is disordered; the sequence is KQLPESKEGK…LSHGSTTSYK (68 aa). Over residues 604–617 the composition is skewed to acidic residues; the sequence is SSSDEGSQELEESI. A C-LIP region spans residues 635–837; the sequence is YKKSLRLSSD…RIFTVNPKGE (203 aa). The DXDXT motif motif lies at 689–693; the sequence is DIDGT. The short motif at 700–704 is the LXXIL motif element; sequence LGQIL.

Belongs to the lipin family. It depends on Mg(2+) as a cofactor. In terms of tissue distribution, expressed in liver, lung, kidney, placenta, spleen, thymus, lymph node, prostate, testes, small intestine, and colon.

It is found in the nucleus. The protein localises to the cytoplasm. It localises to the cytosol. The protein resides in the endoplasmic reticulum membrane. The catalysed reaction is a 1,2-diacyl-sn-glycero-3-phosphate + H2O = a 1,2-diacyl-sn-glycerol + phosphate. Inhibited by N-ethylmaleimide. In terms of biological role, acts as a magnesium-dependent phosphatidate phosphatase enzyme which catalyzes the conversion of phosphatidic acid to diacylglycerol during triglyceride, phosphatidylcholine and phosphatidylethanolamine biosynthesis in the endoplasmic reticulum membrane. Plays important roles in controlling the metabolism of fatty acids at different levels. Also acts as a nuclear transcriptional coactivator for PPARGC1A to modulate lipid metabolism. In Homo sapiens (Human), this protein is Phosphatidate phosphatase LPIN2.